A 732-amino-acid chain; its full sequence is MDAKTDDQGGKCPFPHGGGSRGHRNRDWWPEQLDINMLHRNSTLSDPLGKAFDYAKEFESLDLDAVIKDLHALMTDSQDWWPADFGHYGGLMIRMAWHSAGTYRTTDGRGGAGAGQQRFAPLNSWPDNANLDKARRLLWPIKQKYGNKISWADLYVLTGNVALESMGFKTFGFAGGRADTWEPEELFWGPEGSWLGDERYSGERQLHDALGAVQMGLIYVNPEGPNGNPDPVAAAKDIRETFARMAMNDEETVALIAGGHTFGKTHGAGDPSLIGAEPEGGALEDQGLGWKSKFGTGFGADAITGGPEVIWTQTPTQWSNFFFENLFGFEWELDKSPAGAKQWKAKGAEATVPDPFDPTKKRVPTMLTTDLSLRFDPAYEKISRRFFENPDQFADAFARAWFKLTHRDMGPKVRYRGKLVPKEDLIWQDPIPPVDHELVSAKDIADLKARILASGLSVSQLVSTAFASASTYRHSDKRGGANGARIRFAPQKDWEVNQPADLAQVLGKLEAIQKAFNDAQSGGKKVSLADLIVLGGSAAVEKAAKDAGTEVEVPFTPGRMDALEEQTDGDSFKVLEPRADGFRNFIGKRHQFMQPEEALVDRAQLLNLTAPEMTVLLGGLRVLGGNVGHDSHGVFTDRPEKLTNDFFVNLLDMKTAWSLSATAEGVYEGRDRKTGDLRWTGTRVDLIFGSHSQLRALAEVYGQSDAQTKFAQDFVAAWTKVMNADRFDLAAK.

The interval 1-26 (MDAKTDDQGGKCPFPHGGGSRGHRNR) is disordered. The segment at residues 97–219 (WHSAGTYRTT…LGAVQMGLIY (123 aa)) is a cross-link (tryptophyl-tyrosyl-methioninium (Trp-Tyr) (with M-245)). Residue H98 is the Proton acceptor of the active site. The segment at residues 219–245 (YVNPEGPNGNPDPVAAAKDIRETFARM) is a cross-link (tryptophyl-tyrosyl-methioninium (Tyr-Met) (with W-97)). A heme b-binding site is contributed by H260.

The protein belongs to the peroxidase family. Peroxidase/catalase subfamily. In terms of assembly, homodimer or homotetramer. Heme b serves as cofactor. In terms of processing, formation of the three residue Trp-Tyr-Met cross-link is important for the catalase, but not the peroxidase activity of the enzyme.

The catalysed reaction is H2O2 + AH2 = A + 2 H2O. The enzyme catalyses 2 H2O2 = O2 + 2 H2O. Functionally, bifunctional enzyme with both catalase and broad-spectrum peroxidase activity. The chain is Catalase-peroxidase from Rhodopseudomonas palustris (strain BisB5).